The following is a 349-amino-acid chain: Transcription factor HBP-1a (349 aa).

Residues 1 to 11 show a composition bias toward polar residues; sequence MGSNDPSTPSK. 4 disordered regions span residues 1-39, 101-196, 224-277, and 312-349; these read MGSNDPSTPSKASKPPEQEQPPATTSGTTAPVYPEWPGF, FHYP…NKPM, GATG…QAEC, and NTSLKAKLGESGGGGGSDAVPDMNERGDTNGGSHQKEP. Positions 113–124 are enriched in low complexity; the sequence is PAGAQGAAPGAA. A compositionally biased stretch (polar residues) spans 174-191; that stretch reads NENGSAQNGVSHSSSHGT. The bZIP domain maps to 252 to 315; that stretch reads ELKKQKRKLS…EELLSKNTSL (64 aa). Residues 254-273 form a basic motif region; that stretch reads KKQKRKLSNRESARRSRLRK. The span at 261–277 shows a compositional bias: basic and acidic residues; that stretch reads SNRESARRSRLRKQAEC. A leucine-zipper region spans residues 280-315; the sequence is LGQRAEALKSENSSLRIELDRIKKEYEELLSKNTSL. Residues 334–349 are compositionally biased toward basic and acidic residues; the sequence is MNERGDTNGGSHQKEP.

This sequence belongs to the bZIP family. Binds DNA as a dimer.

It localises to the nucleus. In terms of biological role, binds to the hexamer motif 5'-ACGTCA-3' of histone gene promoters. In Triticum aestivum (Wheat), this protein is Transcription factor HBP-1a.